A 368-amino-acid chain; its full sequence is Glutamate 5-kinase (368 aa).

Residue lysine 18 participates in ATP binding. Substrate contacts are provided by serine 58, aspartate 145, and asparagine 157. ATP is bound by residues 177–178 (SD) and 218–224 (TGGMASK). A PUA domain is found at 280–358 (AGSLTLDEGA…SELPGELRRP (79 aa)).

Belongs to the glutamate 5-kinase family.

It is found in the cytoplasm. It catalyses the reaction L-glutamate + ATP = L-glutamyl 5-phosphate + ADP. The protein operates within amino-acid biosynthesis; L-proline biosynthesis; L-glutamate 5-semialdehyde from L-glutamate: step 1/2. Functionally, catalyzes the transfer of a phosphate group to glutamate to form L-glutamate 5-phosphate. The sequence is that of Glutamate 5-kinase from Mycobacterium ulcerans (strain Agy99).